Reading from the N-terminus, the 265-residue chain is Thiazole synthase (265 aa).

Residue K107 is the Schiff-base intermediate with DXP of the active site. 1-deoxy-D-xylulose 5-phosphate-binding positions include G168, A194 to G195, and N216 to T217.

This sequence belongs to the ThiG family. As to quaternary structure, homotetramer. Forms heterodimers with either ThiH or ThiS.

It localises to the cytoplasm. The enzyme catalyses [ThiS sulfur-carrier protein]-C-terminal-Gly-aminoethanethioate + 2-iminoacetate + 1-deoxy-D-xylulose 5-phosphate = [ThiS sulfur-carrier protein]-C-terminal Gly-Gly + 2-[(2R,5Z)-2-carboxy-4-methylthiazol-5(2H)-ylidene]ethyl phosphate + 2 H2O + H(+). It functions in the pathway cofactor biosynthesis; thiamine diphosphate biosynthesis. Its function is as follows. Catalyzes the rearrangement of 1-deoxy-D-xylulose 5-phosphate (DXP) to produce the thiazole phosphate moiety of thiamine. Sulfur is provided by the thiocarboxylate moiety of the carrier protein ThiS. In vitro, sulfur can be provided by H(2)S. The protein is Thiazole synthase of Pseudomonas aeruginosa (strain LESB58).